A 755-amino-acid chain; its full sequence is Periplasmic nitrate reductase (755 aa).

The segment at residues 1–32 is a signal peptide (tat-type signal); the sequence is MSTSRRDFLKYFAMSAAVAAASGAGFGSLALA. The 4Fe-4S Mo/W bis-MGD-type domain occupies 38-93; the sequence is EKWVKGVCRYCGTGCGVLVGVKDGKAVAIQGDPNNHNAGLLCLKGSLLIPVLNSKE. [4Fe-4S] cluster-binding residues include cysteine 45, cysteine 48, cysteine 52, and cysteine 79. Mo-bis(molybdopterin guanine dinucleotide)-binding positions include lysine 81, glutamine 143, asparagine 168, cysteine 172, 208–212, 236–238, 255–257, methionine 340, glutamine 344, asparagine 450, 475–477, and 647–656; these read NTSEA, DPR, GTD, IEA, and SMRVIDHWHT. Substrate contacts are provided by residues 648-653 and phenylalanine 721; that span reads MRVIDH. Positions 729 and 746 each coordinate Mo-bis(molybdopterin guanine dinucleotide).

The protein belongs to the prokaryotic molybdopterin-containing oxidoreductase family. NasA/NapA/NarB subfamily. As to quaternary structure, monomer. Component of the periplasmic nitrate reductase NapAB complex composed of NapA and NapB. The cofactor is [4Fe-4S] cluster. Requires Mo-bis(molybdopterin guanine dinucleotide) as cofactor. Predicted to be exported by the Tat system. The position of the signal peptide cleavage has been experimentally proven.

It localises to the periplasm. The catalysed reaction is 2 Fe(II)-[cytochrome] + nitrate + 2 H(+) = 2 Fe(III)-[cytochrome] + nitrite + H2O. Activated by potassium and sodium ions and inhibited by magnesium and calcium ions. Functionally, catalytic subunit of the periplasmic nitrate reductase complex NapAB. Receives electrons from NapB and catalyzes the reduction of nitrate to nitrite. The chain is Periplasmic nitrate reductase from Desulfovibrio desulfuricans (strain ATCC 27774 / DSM 6949 / MB).